Consider the following 584-residue polypeptide: Proteasome-associated ATPase (584 aa).

Positions 8–90 form a coiled coil; sequence RHAERDRDEL…KEEVDRLSQP (83 aa). Position 272-277 (272-277) interacts with ATP; that stretch reads GCGKTL. Residues 583 to 584 are docks into pockets in the proteasome alpha-ring; that stretch reads YL.

It belongs to the AAA ATPase family. As to quaternary structure, homohexamer. Assembles into a hexameric ring structure that caps the 20S proteasome core. Strongly interacts with the prokaryotic ubiquitin-like protein Pup through a hydrophobic interface; the interacting region of ARC lies in its N-terminal coiled-coil domain. There is one Pup binding site per ARC hexamer ring. Upon ATP-binding, the C-terminus of ARC interacts with the alpha-rings of the proteasome core, possibly by binding to the intersubunit pockets.

It participates in protein degradation; proteasomal Pup-dependent pathway. In terms of biological role, ATPase which is responsible for recognizing, binding, unfolding and translocation of pupylated proteins into the bacterial 20S proteasome core particle. May be essential for opening the gate of the 20S proteasome via an interaction with its C-terminus, thereby allowing substrate entry and access to the site of proteolysis. Thus, the C-termini of the proteasomal ATPase may function like a 'key in a lock' to induce gate opening and therefore regulate proteolysis. The protein is Proteasome-associated ATPase of Thermobifida fusca (strain YX).